A 205-amino-acid polypeptide reads, in one-letter code: Protein N-terminal glutamine amidohydrolase (205 aa).

Active-site residues include Cys20, His74, and Asp90.

Belongs to the NTAQ1 family. As to quaternary structure, monomer.

It catalyses the reaction N-terminal L-glutaminyl-[protein] + H2O = N-terminal L-glutamyl-[protein] + NH4(+). Its function is as follows. Mediates the side-chain deamidation of N-terminal glutamine residues to glutamate, an important step in N-end rule pathway of protein degradation. Conversion of the resulting N-terminal glutamine to glutamate renders the protein susceptible to arginylation, polyubiquitination and degradation as specified by the N-end rule. Does not act on substrates with internal or C-terminal glutamine and does not act on non-glutamine residues in any position. This is Protein N-terminal glutamine amidohydrolase (tun) from Drosophila willistoni (Fruit fly).